The following is a 187-amino-acid chain: UPF0340 protein SP70585_0722 (187 aa).

The protein belongs to the UPF0340 family.

The polypeptide is UPF0340 protein SP70585_0722 (Streptococcus pneumoniae (strain 70585)).